Here is a 102-residue protein sequence, read N- to C-terminus: Large ribosomal subunit protein bL28 (102 aa).

Positions 1–20 are enriched in polar residues; sequence MSNSCDLTGHGWQNGNMVSH. The tract at residues 1–27 is disordered; that stretch reads MSNSCDLTGHGWQNGNMVSHSNRKTKK.

The protein belongs to the bacterial ribosomal protein bL28 family.

The protein is Large ribosomal subunit protein bL28 of Neorickettsia sennetsu (strain ATCC VR-367 / Miyayama) (Ehrlichia sennetsu).